The sequence spans 184 residues: Large ribosomal subunit protein uL5 (184 aa).

It belongs to the universal ribosomal protein uL5 family. In terms of assembly, part of the 50S ribosomal subunit; part of the 5S rRNA/L5/L18/L25 subcomplex. Contacts the 5S rRNA and the P site tRNA. Forms a bridge to the 30S subunit in the 70S ribosome.

This is one of the proteins that bind and probably mediate the attachment of the 5S RNA into the large ribosomal subunit, where it forms part of the central protuberance. In the 70S ribosome it contacts protein S13 of the 30S subunit (bridge B1b), connecting the 2 subunits; this bridge is implicated in subunit movement. Contacts the P site tRNA; the 5S rRNA and some of its associated proteins might help stabilize positioning of ribosome-bound tRNAs. This Pelagibacter ubique (strain HTCC1062) protein is Large ribosomal subunit protein uL5.